Reading from the N-terminus, the 233-residue chain is Low affinity immunoglobulin gamma Fc region receptor III-B (233 aa).

The signal sequence occupies residues 1–16 (MWQLLLPTALLLLVSA). Ig-like C2-type domains follow at residues 40-96 (KDSV…LSTL) and 121-179 (EDPI…VGSK). Cysteines 47 and 89 form a disulfide. N-linked (GlcNAc...) asparagine glycosylation is found at Asn-56, Asn-63, Asn-82, and Asn-92. A disulfide bond links Cys-128 and Cys-172. Asn-180 and Asn-187 each carry an N-linked (GlcNAc...) asparagine glycan. A lipid anchor (GPI-anchor amidated serine) is attached at Ser-200. A propeptide spans 201 to 233 (SFSPPGYQVSFCLVMVLLFAVDTGLYFSVKTNI) (removed in mature form).

In terms of assembly, monomer. Interacts with INPP5D/SHIP1. Post-translationally, glycosylated. Glycosylation plays an inhibitory role in the interaction with IgG3. The soluble form is produced by a proteolytic cleavage. As to expression, expressed specifically by polymorphonuclear leukocytes (neutrophils). Also expressed by stimulated eosinophils.

The protein localises to the cell membrane. It localises to the secreted. Functionally, receptor for the Fc region of immunoglobulins gamma. Low affinity receptor. Binds complexed or aggregated IgG and also monomeric IgG. Contrary to III-A, is not capable to mediate antibody-dependent cytotoxicity and phagocytosis. May serve as a trap for immune complexes in the peripheral circulation which does not activate neutrophils. The protein is Low affinity immunoglobulin gamma Fc region receptor III-B (FCGR3B) of Homo sapiens (Human).